Consider the following 61-residue polypeptide: Large ribosomal subunit protein uL29 (61 aa).

It belongs to the universal ribosomal protein uL29 family.

The protein is Large ribosomal subunit protein uL29 of Campylobacter lari (strain RM2100 / D67 / ATCC BAA-1060).